The following is a 593-amino-acid chain: Serine/threonine-protein kinase PAK 4 (593 aa).

Positions 11-24 (ISAPSNFEHRVHTG) constitute a CRIB domain. The interval 25-322 (FDQHEQKFTG…VVDPGDPRSY (298 aa)) is linker. Ser41 bears the Phosphoserine mark. The residue at position 78 (Lys78) is an N6-methyllysine. A disordered region spans residues 95-303 (TRSNSLRRES…PQREPQRVSH (209 aa)). Ser104 carries the phosphoserine modification. Basic and acidic residues predominate over residues 118–133 (LEERAAPARMAPDKAG). The residue at position 148 (Ser148) is a Phosphoserine. Basic and acidic residues predominate over residues 149-164 (GDRRRVGPEKRPKSSR). Ser181 bears the Phosphoserine mark. The segment covering 184–197 (DVSTPQPGSLTSGT) has biased composition (polar residues). Thr187 bears the Phosphothreonine mark. A Phosphoserine modification is found at Ser195. Position 207 is a phosphothreonine (Thr207). Low complexity predominate over residues 238–258 (AAPQSSSSSRPPTRARGAPSP). Phosphoserine occurs at positions 257 and 266. Positions 267–280 (EPQLAPPARALAAP) are enriched in low complexity. The span at 281 to 292 (AVPPAPGPPGPR) shows a compositional bias: pro residues. The residue at position 293 (Ser293) is a Phosphoserine. Residues 294–303 (PQREPQRVSH) are compositionally biased toward basic and acidic residues. A Protein kinase domain is found at 323–574 (LDNFIKIGEG…AAELLKHPFL (252 aa)). ATP-binding positions include 329-337 (IGEGSTGIV) and Lys352. Residue Asp442 is the Proton acceptor of the active site. Residue Ser476 is modified to Phosphoserine; by autocatalysis.

Belongs to the protein kinase superfamily. STE Ser/Thr protein kinase family. STE20 subfamily. In terms of assembly, interacts tightly with GTP-bound but not GDP-bound CDC42/p21 and weakly with RAC1. Interacts with FGFR2 and GRB2. Interacts with INKA1. Interacts with SH3RF2. Interacts with RHOU and PAXI; the PAK4-RHOU complex protects RHOU from ubiquitination and acts as a scaffold to suppport paxillin/PAXI phosphorylation. In terms of processing, autophosphorylated on serine residues when activated by CDC42/p21. Phosphorylated on tyrosine residues upon stimulation of FGFR2. Methylated by SETD6. Post-translationally, polyubiquitinated, leading to its proteasomal degradation.

The protein localises to the cytoplasm. The catalysed reaction is L-seryl-[protein] + ATP = O-phospho-L-seryl-[protein] + ADP + H(+). It catalyses the reaction L-threonyl-[protein] + ATP = O-phospho-L-threonyl-[protein] + ADP + H(+). With respect to regulation, inhibited by INKA1; which inhibits the serine/threonine-protein kinase activity by binding PAK4 in a substrate-like manner. In terms of biological role, serine/threonine protein kinase that plays a role in a variety of different signaling pathways including cytoskeleton regulation, cell migration, growth, proliferation or cell survival. Activation by various effectors including growth factor receptors or active CDC42 and RAC1 results in a conformational change and a subsequent autophosphorylation on several serine and/or threonine residues. Phosphorylates and inactivates the protein phosphatase SSH1, leading to increased inhibitory phosphorylation of the actin binding/depolymerizing factor cofilin. Decreased cofilin activity may lead to stabilization of actin filaments. Phosphorylates LIMK1, a kinase that also inhibits the activity of cofilin. Phosphorylates integrin beta5/ITGB5 and thus regulates cell motility. Phosphorylates ARHGEF2 and activates the downstream target RHOA that plays a role in the regulation of assembly of focal adhesions and actin stress fibers. Stimulates cell survival by phosphorylating the BCL2 antagonist of cell death BAD. Alternatively, inhibits apoptosis by preventing caspase-8 binding to death domain receptors in a kinase independent manner. Plays a role in cell-cycle progression by controlling levels of the cell-cycle regulatory protein CDKN1A and by phosphorylating RAN. Promotes kinase-independent stabilization of RHOU, thereby contributing to focal adhesion disassembly during cell migration. The chain is Serine/threonine-protein kinase PAK 4 from Mus musculus (Mouse).